The primary structure comprises 250 residues: Enoyl-[acyl-carrier-protein] reductase [NADPH] FabL (250 aa).

Residues Ser-13 to Val-16, Ala-36 to Ser-38, Asn-62 to Val-63, and Asn-89 each bind NADP(+). Residues Tyr-151 and Lys-158 each act as proton acceptor in the active site. NADP(+)-binding positions include Lys-158 and Ile-187 to Thr-189.

It belongs to the short-chain dehydrogenases/reductases (SDR) family. As to quaternary structure, homotetramer.

It catalyses the reaction a 2,3-saturated acyl-[ACP] + NADP(+) = a (2E)-enoyl-[ACP] + NADPH + H(+). The catalysed reaction is (2E)-butenoyl-[ACP] + NADPH + H(+) = butanoyl-[ACP] + NADP(+). The protein operates within lipid metabolism; fatty acid biosynthesis. With respect to regulation, inhibited by triclosan. In terms of biological role, catalyzes the reduction of a carbon-carbon double bond in an enoyl moiety that is covalently linked to an acyl carrier protein (ACP). It confers resistance to triclosan. This is Enoyl-[acyl-carrier-protein] reductase [NADPH] FabL (fabL) from Bacillus subtilis (strain 168).